The sequence spans 522 residues: MAAATAADVAEDTASVYSGKLTLYVFLTCGVAATGGLIIGYDIGISGGVTSMDTFLGKFFPSVLHQEQTAQGTSQYCKFNSQPLTAFTSSLYLAALVASFFVASFTRALGRKWSMFGGGVSFLAGATLNGAARNVAMLIVGRILLGIGVAFCGLSTPIYLSEMAPPRLRGMLNIGLQLMITVGIFSANLVNYGAAKIRGGWGWRVSLGLAAAPACVIAVGSLFLPDSPSSLINRGRHEQARRVLRRIRGTDEVDDEYGDLVAAASEIEVYSGCSARRRPWRDVLQRRYRPQLAMAVLIPFFQQLTGINVIMFYAPVLFKTIGLGGDASLMSAVITGLVNIVATFVSIATVDSLGRRKLLFQGGCQMLVSQVIIGTLIGVVFGTSGDGNISRALAVCIVVFICVYVAGFAWSWGPLGVLLPSEIFPLEVRPAGQSISVAVNMLCTFAVAEAFLPMLCHMRFGLFYFFSGWVLVMTLFVSAFLPETKGVPIEKMTVVWRTHWFWGRFYCNQDADAHVQVANSKV.

Topologically, residues 1–24 are cytoplasmic; that stretch reads MAAATAADVAEDTASVYSGKLTLY. The helical transmembrane segment at 25–45 threads the bilayer; the sequence is VFLTCGVAATGGLIIGYDIGI. Over 46–82 the chain is Extracellular; it reads SGGVTSMDTFLGKFFPSVLHQEQTAQGTSQYCKFNSQ. A helical membrane pass occupies residues 83-103; that stretch reads PLTAFTSSLYLAALVASFFVA. The Cytoplasmic portion of the chain corresponds to 104-111; it reads SFTRALGR. The chain crosses the membrane as a helical span at residues 112–132; sequence KWSMFGGGVSFLAGATLNGAA. Topologically, residues 133–134 are extracellular; the sequence is RN. Residues 135 to 155 form a helical membrane-spanning segment; the sequence is VAMLIVGRILLGIGVAFCGLS. At 156–169 the chain is on the cytoplasmic side; the sequence is TPIYLSEMAPPRLR. A helical membrane pass occupies residues 170–190; sequence GMLNIGLQLMITVGIFSANLV. The Extracellular segment spans residues 191 to 204; it reads NYGAAKIRGGWGWR. Residues 205–225 traverse the membrane as a helical segment; it reads VSLGLAAAPACVIAVGSLFLP. The Cytoplasmic portion of the chain corresponds to 226–291; sequence DSPSSLINRG…DVLQRRYRPQ (66 aa). A helical membrane pass occupies residues 292 to 312; sequence LAMAVLIPFFQQLTGINVIMF. Residues 313–329 are Extracellular-facing; sequence YAPVLFKTIGLGGDASL. A helical transmembrane segment spans residues 330-350; the sequence is MSAVITGLVNIVATFVSIATV. The Cytoplasmic portion of the chain corresponds to 351–361; the sequence is DSLGRRKLLFQ. A helical membrane pass occupies residues 362–382; that stretch reads GGCQMLVSQVIIGTLIGVVFG. Over 383–391 the chain is Extracellular; sequence TSGDGNISR. A helical transmembrane segment spans residues 392 to 412; that stretch reads ALAVCIVVFICVYVAGFAWSW. Topologically, residues 413 to 434 are cytoplasmic; sequence GPLGVLLPSEIFPLEVRPAGQS. The chain crosses the membrane as a helical span at residues 435 to 455; sequence ISVAVNMLCTFAVAEAFLPML. The Extracellular segment spans residues 456–459; it reads CHMR. The helical transmembrane segment at 460–480 threads the bilayer; it reads FGLFYFFSGWVLVMTLFVSAF. At 481-522 the chain is on the cytoplasmic side; the sequence is LPETKGVPIEKMTVVWRTHWFWGRFYCNQDADAHVQVANSKV.

It belongs to the major facilitator superfamily. Sugar transporter (TC 2.A.1.1) family.

The protein localises to the membrane. In terms of biological role, mediates active uptake of hexoses by sugar:proton symport. Can transport glucose. The chain is Sugar transport protein MST2 from Oryza sativa subsp. japonica (Rice).